Reading from the N-terminus, the 329-residue chain is Phenylalanine--tRNA ligase alpha subunit (329 aa).

Residue Glu-253 coordinates Mg(2+).

Belongs to the class-II aminoacyl-tRNA synthetase family. Phe-tRNA synthetase alpha subunit type 1 subfamily. As to quaternary structure, tetramer of two alpha and two beta subunits. Mg(2+) is required as a cofactor.

It localises to the cytoplasm. The enzyme catalyses tRNA(Phe) + L-phenylalanine + ATP = L-phenylalanyl-tRNA(Phe) + AMP + diphosphate + H(+). The chain is Phenylalanine--tRNA ligase alpha subunit from Teredinibacter turnerae (strain ATCC 39867 / T7901).